We begin with the raw amino-acid sequence, 954 residues long: DNA repair and telomere maintenance protein NBS1 (954 aa).

Positions 22-85 (YLFGRTVAEA…KGTLVNGVQI (64 aa)) constitute an FHA domain. 2 BRCT domains span residues 107 to 186 (TLKI…NAIV) and 244 to 349 (GYTF…LEAI). Residues 368 to 377 (VSVSASVEPQ) show a composition bias toward polar residues. Disordered stretches follow at residues 368–431 (VSVS…FKGF), 444–506 (QAQS…PLPE), 528–580 (IEAG…KQED), 630–654 (VRQP…WDPR), and 692–954 (GIGD…GRRR). The segment covering 378-393 (SSEKVRPAVEDRKEVE) has biased composition (basic and acidic residues). Residues 416-428 (PHRRERRTGRSRF) show a composition bias toward basic residues. The segment covering 458–471 (PSASQDSLFVSQRE) has biased composition (polar residues). A compositionally biased stretch (acidic residues) spans 541–554 (PEPEREDEDVEMVE). Composition is skewed to basic and acidic residues over residues 640 to 654 (RTRE…WDPR) and 704 to 715 (GRVPRRPKETQT). Residues 726 to 737 (DGSGFAAAAASG) show a composition bias toward low complexity. A compositionally biased stretch (basic and acidic residues) spans 738–751 (KGKEKDKENEKEVG). Composition is skewed to low complexity over residues 801–815 (EVVS…ASEP) and 826–842 (RANA…SQTQ). The span at 936 to 945 (GSEEESEDDE) shows a compositional bias: acidic residues.

This sequence belongs to the Nibrin family. In terms of assembly, component of the MRN complex composed of two heterodimers RAD50 and MRE11 associated with a single NBS1.

Its subcellular location is the nucleus. It is found in the chromosome. Component of the MRN complex, which plays a central role in double-strand break (DSB) repair, DNA recombination, maintenance of telomere integrity and meiosis. The MRN complex is involved in the repair of DNA double-strand breaks (DSBs) via homologous recombination (HR), an error-free mechanism which primarily occurs during S and G2 phases. The complex (1) mediates the end resection of damaged DNA, which generates proper single-stranded DNA, a key initial steps in HR, and is (2) required for the recruitment of other repair factors and efficient activation of ATM and ATR upon DNA damage. The MRN complex possesses single-strand endonuclease activity and double-strand-specific 3'-5' exonuclease activity, which are provided by MRE11, to initiate end resection, which is required for single-strand invasion and recombination. Within the MRN complex, NBS1 acts as a protein-protein adapter, which specifically recognizes and binds phosphorylated proteins, promoting their recruitment to DNA damage sites. Recruits MRE11 and RAD50 components of the MRN complex to DSBs in response to DNA damage. This Chaetomium thermophilum (strain DSM 1495 / CBS 144.50 / IMI 039719) (Thermochaetoides thermophila) protein is DNA repair and telomere maintenance protein NBS1.